Here is a 339-residue protein sequence, read N- to C-terminus: Outer membrane protein assembly factor BamC (339 aa).

The N-terminal stretch at 1–19 (MKFSRQLVLGSLAVLVLSA) is a signal peptide. A lipid anchor (N-palmitoyl cysteine) is attached at C20. C20 carries the S-diacylglycerol cysteine lipid modification.

The protein belongs to the BamC family. In terms of assembly, part of the Bam complex.

The protein localises to the cell outer membrane. Functionally, part of the outer membrane protein assembly complex, which is involved in assembly and insertion of beta-barrel proteins into the outer membrane. The polypeptide is Outer membrane protein assembly factor BamC (Vibrio cholerae serotype O1 (strain ATCC 39315 / El Tor Inaba N16961)).